A 336-amino-acid chain; its full sequence is Izumo sperm-egg fusion protein 1 (336 aa).

Positions 1-16 (MTLPILLGWFLTLCSS) are cleaved as a signal peptide. The Ig-like C2-type domain maps to 158 to 247 (PPLDCGEHHL…LKDQKGTALS (90 aa)). A disulfide bridge connects residues C179 and C236. Residues 287 to 307 (SFLTVLILLTVLSITGSLIII) form a helical membrane-spanning segment.

This sequence belongs to the Izumo family. In terms of assembly, forms a complex with tmem81 and spaca6 on spermatocyte cell membrane. The complex binds to oocyte protein bncr. Expressed in sperm.

The protein resides in the cell membrane. The protein localises to the cytoplasmic vesicle. It localises to the secretory vesicle. It is found in the acrosome membrane. In terms of biological role, essential sperm cell-surface protein required for fertilization by acting as a ligand for bncr receptor on egg. The interaction of the complex izumo1:spaca6:tmemt81 with bncr is a necessary adhesion event between sperm and egg that is required for fertilization. In Danio rerio (Zebrafish), this protein is Izumo sperm-egg fusion protein 1.